The primary structure comprises 71 residues: uncharacterized protein (71 aa).

This is an uncharacterized protein from Methanocaldococcus jannaschii (strain ATCC 43067 / DSM 2661 / JAL-1 / JCM 10045 / NBRC 100440) (Methanococcus jannaschii).